A 309-amino-acid chain; its full sequence is GTP cyclohydrolase FolE2 (309 aa).

The protein belongs to the GTP cyclohydrolase IV family.

The enzyme catalyses GTP + H2O = 7,8-dihydroneopterin 3'-triphosphate + formate + H(+). The protein operates within cofactor biosynthesis; 7,8-dihydroneopterin triphosphate biosynthesis; 7,8-dihydroneopterin triphosphate from GTP: step 1/1. Functionally, converts GTP to 7,8-dihydroneopterin triphosphate. The polypeptide is GTP cyclohydrolase FolE2 (Serratia proteamaculans (strain 568)).